Here is a 484-residue protein sequence, read N- to C-terminus: tRNA-2-methylthio-N(6)-dimethylallyladenosine synthase (484 aa).

The MTTase N-terminal domain occupies G36–E153. Residues C45, C82, C116, C190, C194, and C197 each coordinate [4Fe-4S] cluster. In terms of domain architecture, Radical SAM core spans R176–S415. In terms of domain architecture, TRAM spans Q416–L479. The disordered stretch occupies residues E428–F450.

The protein belongs to the methylthiotransferase family. MiaB subfamily. Monomer. [4Fe-4S] cluster is required as a cofactor.

The protein localises to the cytoplasm. The enzyme catalyses N(6)-dimethylallyladenosine(37) in tRNA + (sulfur carrier)-SH + AH2 + 2 S-adenosyl-L-methionine = 2-methylsulfanyl-N(6)-dimethylallyladenosine(37) in tRNA + (sulfur carrier)-H + 5'-deoxyadenosine + L-methionine + A + S-adenosyl-L-homocysteine + 2 H(+). In terms of biological role, catalyzes the methylthiolation of N6-(dimethylallyl)adenosine (i(6)A), leading to the formation of 2-methylthio-N6-(dimethylallyl)adenosine (ms(2)i(6)A) at position 37 in tRNAs that read codons beginning with uridine. The polypeptide is tRNA-2-methylthio-N(6)-dimethylallyladenosine synthase (Xanthomonas oryzae pv. oryzae (strain MAFF 311018)).